The following is a 176-amino-acid chain: Sperm-egg fusion protein TMEM95 (176 aa).

The first 16 residues, 1–16 (MWRLALGGVFLAAAQA), serve as a signal peptide directing secretion. Disulfide bonds link Cys-17–Cys-118, Cys-20–Cys-121, Cys-105–Cys-128, and Cys-109–Cys-134. Topologically, residues 17-145 (CVFCRLPAHD…PGSQDLWEAK (129 aa)) are extracellular. A helical membrane pass occupies residues 146 to 166 (ILLLSIFGAFLLLGVLSLLVE). Residues 167–176 (SHHLQAKSGL) are Cytoplasmic-facing.

The protein belongs to the TMEM95 family. In terms of assembly, does not interact with sperm-egg fusion proteins IZUMO1 or IZUMO1R/JUNO. Post-translationally, N-glycosylated. Spermatozoa (at protein level).

It is found in the cytoplasmic vesicle. Its subcellular location is the secretory vesicle. It localises to the acrosome membrane. In terms of biological role, sperm protein required for fusion of sperm with the egg membrane during fertilization. This is Sperm-egg fusion protein TMEM95 from Homo sapiens (Human).